A 489-amino-acid chain; its full sequence is Alpha-amylase (489 aa).

Residues 1–16 (HFKPILVLCLATLALG) form the signal peptide. A disulfide bridge connects residues C44 and C102. Ca(2+) is bound by residues N116, R164, and D173. C152 and C166 form a disulfide bridge. R201 provides a ligand contact to chloride. D203 acts as the Nucleophile in catalysis. H207 is a binding site for Ca(2+). Residue E240 is the Proton donor of the active site. Positions 303 and 339 each coordinate chloride. 2 disulfide bridges follow: C372/C378 and C443/C455.

It belongs to the glycosyl hydrolase 13 family. In terms of assembly, monomer. Ca(2+) is required as a cofactor. Chloride serves as cofactor.

It carries out the reaction Endohydrolysis of (1-&gt;4)-alpha-D-glucosidic linkages in polysaccharides containing three or more (1-&gt;4)-alpha-linked D-glucose units.. This chain is Alpha-amylase, found in Tribolium castaneum (Red flour beetle).